The primary structure comprises 263 residues: Hatching enzyme 1.2 (263 aa).

A signal peptide spans 1-19 (MDIRASLSILLLLFGLSQA). A propeptide spans 20–64 (SPLREFEAIFVSEPETVDITTQILETNKGSSEVLFEGDVVLPKNR) (activation peptide). In terms of domain architecture, Peptidase M12A spans 65 to 263 (NALICEDKSC…ILRINKLYGC (199 aa)). Intrachain disulfides connect Cys69–Cys74, Cys114–Cys263, and Cys135–Cys155. His163 contributes to the Zn(2+) binding site. The active site involves Glu164. Residues His167 and His173 each coordinate Zn(2+).

Requires Zn(2+) as cofactor. As to expression, expressed in cells of the hatching gland.

Its subcellular location is the secreted. The enzyme catalyses Hydrolysis of the inner layer of fish egg envelope. Also hydrolysis of casein and small molecule substrates such as succinyl-Leu-Leu-Val-Tyr-|-7-(4-methyl)coumarylamide.. Metalloendopeptidase which participates in the breakdown of the egg envelope at the time of hatching. Cleaves the N-terminal regions of the zona pellucia glycoproteins ZP2 and ZP3, where it specifically recognizes the peptide sequences TVQQS-|-DYLIK (major site) and KLMLK-|-APEPF (minor site). This is Hatching enzyme 1.2 from Danio rerio (Zebrafish).